A 490-amino-acid chain; its full sequence is Ribulose bisphosphate carboxylase large chain (490 aa).

The substrate site is built by Asn127 and Thr177. The Proton acceptor role is filled by Lys179. Lys181 serves as a coordination point for substrate. Residues Lys205, Asp207, and Glu208 each contribute to the Mg(2+) site. Lys205 carries the post-translational modification N6-carboxylysine. The active-site Proton acceptor is the His297. Substrate-binding residues include Arg298, His330, and Ser382.

It belongs to the RuBisCO large chain family. Type I subfamily. As to quaternary structure, heterohexadecamer of 8 large chains and 8 small chains. It depends on Mg(2+) as a cofactor.

It is found in the plastid. Its subcellular location is the chloroplast. It catalyses the reaction 2 (2R)-3-phosphoglycerate + 2 H(+) = D-ribulose 1,5-bisphosphate + CO2 + H2O. It carries out the reaction D-ribulose 1,5-bisphosphate + O2 = 2-phosphoglycolate + (2R)-3-phosphoglycerate + 2 H(+). In terms of biological role, ruBisCO catalyzes two reactions: the carboxylation of D-ribulose 1,5-bisphosphate, the primary event in carbon dioxide fixation, as well as the oxidative fragmentation of the pentose substrate in the photorespiration process. Both reactions occur simultaneously and in competition at the same active site. This Cylindrotheca sp. (strain N1) (Marine diatom) protein is Ribulose bisphosphate carboxylase large chain.